The following is a 542-amino-acid chain: CTP synthase (542 aa).

An amidoligase domain region spans residues 1–265; sequence MARYIFITGG…DDEVLAAFGL (265 aa). Position 13 (S13) interacts with CTP. Residue S13 coordinates UTP. 14–19 provides a ligand contact to ATP; the sequence is SLGKGL. Y54 is an L-glutamine binding site. Residue D71 coordinates ATP. Mg(2+) is bound by residues D71 and E139. Residues 146 to 148, 186 to 191, and K222 contribute to the CTP site; these read DIE and KTKPTQ. UTP is bound by residues 186–191 and K222; that span reads KTKPTQ. 238 to 240 provides a ligand contact to ATP; sequence RDA. The Glutamine amidotransferase type-1 domain occupies 290–541; sequence TIAIVGKYTG…IQAAVVQSRL (252 aa). G352 contributes to the L-glutamine binding site. The active-site Nucleophile; for glutamine hydrolysis is the C379. L-glutamine is bound by residues 380 to 383, E403, and R469; that span reads FGMQ. Active-site residues include H514 and E516.

The protein belongs to the CTP synthase family. Homotetramer.

The catalysed reaction is UTP + L-glutamine + ATP + H2O = CTP + L-glutamate + ADP + phosphate + 2 H(+). It catalyses the reaction L-glutamine + H2O = L-glutamate + NH4(+). It carries out the reaction UTP + NH4(+) + ATP = CTP + ADP + phosphate + 2 H(+). The protein operates within pyrimidine metabolism; CTP biosynthesis via de novo pathway; CTP from UDP: step 2/2. Its activity is regulated as follows. Allosterically activated by GTP, when glutamine is the substrate; GTP has no effect on the reaction when ammonia is the substrate. The allosteric effector GTP functions by stabilizing the protein conformation that binds the tetrahedral intermediate(s) formed during glutamine hydrolysis. Inhibited by the product CTP, via allosteric rather than competitive inhibition. Functionally, catalyzes the ATP-dependent amination of UTP to CTP with either L-glutamine or ammonia as the source of nitrogen. Regulates intracellular CTP levels through interactions with the four ribonucleotide triphosphates. This is CTP synthase from Nitrobacter hamburgensis (strain DSM 10229 / NCIMB 13809 / X14).